The chain runs to 141 residues: Drosulfakinins (141 aa).

The first 31 residues, 1-31 (MGLRRCTHFATLVMPLWALALFFLVVMQVPA), serve as a signal peptide directing secretion. The propeptide occupies 32-73 (QTTSLQISKEDRRLQELESKMGAESEQPNANLVGPSISRFGD). The disordered stretch occupies residues 49–69 (ESKMGAESEQPNANLVGPSIS). Position 82 is a phenylalanine amide (phenylalanine 82). Positions 86-111 (VPLISRPMIPIELDLLMDNDDERTKA) are excised as a propeptide. Position 117 is a sulfotyrosine (tyrosine 117). A Phenylalanine amide modification is found at phenylalanine 122. The residue at position 134 (tyrosine 134) is a Sulfotyrosine. At phenylalanine 139 the chain carries Phenylalanine amide.

The protein belongs to the gastrin/cholecystokinin family.

It is found in the secreted. Its function is as follows. Drosulfakinin-0 (DSK 0) plays diverse biological roles including regulating gut muscle contraction in adults but not in larvae. This chain is Drosulfakinins, found in Drosophila erecta (Fruit fly).